A 558-amino-acid polypeptide reads, in one-letter code: Kelch-like protein 23 (558 aa).

One can recognise a BTB domain in the interval 36-104 (TDITLQCPSG…AYTSQIEITK (69 aa)). A BACK domain is found at 139–240 (CIGMHSFAEF…DPVYLKTALG (102 aa)). Kelch repeat units follow at residues 274–320 (TMYI…CLGP), 321–369 (NIYV…TLGG), 370–416 (CVYA…VLHD), 418–466 (IYVI…PFEN), 467–508 (KLYL…IMNG), and 510–557 (IYVT…CVYN).

The sequence is that of Kelch-like protein 23 (KLHL23) from Homo sapiens (Human).